Here is a 137-residue protein sequence, read N- to C-terminus: Acyl carrier protein 4, chloroplastic (137 aa).

The N-terminal 48 residues, 1–48 (MASLSTTSLSFKAPSTTISQVLRKASSSQSVTFGRFTSSTKSLRLQIS), are a transit peptide targeting the chloroplast. One can recognise a Carrier domain in the interval 53–128 (AETVQKVSDI…EAADLIEDLV (76 aa)). Serine 88 is subject to O-(pantetheine 4'-phosphoryl)serine.

This sequence belongs to the acyl carrier protein (ACP) family. In terms of processing, 4'-phosphopantetheine is transferred from CoA to a specific serine of apo-ACP by acpS. This modification is essential for activity because fatty acids are bound in thioester linkage to the sulfhydryl of the prosthetic group.

It localises to the plastid. The protein resides in the chloroplast. Carrier of the growing fatty acid chain in fatty acid biosynthesis that plays a major role in the biosynthesis of fatty acids in leaves. Required for the biosynthesis of chloroplast photosynthetic membrane lipids such as monogalactosyldiacylglycerol, digalactosyldiacylglycerol and phosphatidylglycerol. Is essential for the biosynthesis of the cuticular wax and cutin polymers in leaves, and for the establishment of systemic acquired resistance (SAR). This Arabidopsis thaliana (Mouse-ear cress) protein is Acyl carrier protein 4, chloroplastic (ACP4).